The sequence spans 210 residues: Mating-type-like protein A1 (210 aa).

The homeobox DNA-binding region spans 141-200; that stretch reads SKKKRQRLDNSTKEFLEKVFEKNKQPNRRERELIAEKHGVSLSQIRVWFTNKRMRKKEPK.

It belongs to the MATA1 family. As to quaternary structure, forms a heterodimer with ALPHA2.

Its subcellular location is the nucleus. Functionally, mating type proteins are sequence specific DNA-binding proteins that act as master switches in yeast differentiation by controlling gene expression in a cell type-specific fashion. Transcriptional corepressor that acts in conjunction with ALPHA2 to repress transcription both of homozygote-specific genes and of genes necessary for the white-opaque switch, a prerequisite for mating. The sequence is that of Mating-type-like protein A1 (MTLA1) from Candida albicans (strain SC5314 / ATCC MYA-2876) (Yeast).